A 121-amino-acid chain; its full sequence is Protein opa (121 aa).

The protein belongs to the opacity porin family.

The chain is Protein opa (opa) from Haemophilus influenzae (strain ATCC 51907 / DSM 11121 / KW20 / Rd).